We begin with the raw amino-acid sequence, 177 residues long: Cytidylate kinase (177 aa).

An ATP-binding site is contributed by 7-15; that stretch reads GSPGSGTTT.

Belongs to the cytidylate kinase family. Type 2 subfamily.

It localises to the cytoplasm. The enzyme catalyses CMP + ATP = CDP + ADP. It catalyses the reaction dCMP + ATP = dCDP + ADP. This Methanocorpusculum labreanum (strain ATCC 43576 / DSM 4855 / Z) protein is Cytidylate kinase.